The primary structure comprises 383 residues: uncharacterized protein (383 aa).

A helical transmembrane segment spans residues 6–26 (LFLFSCLYFIGGNLKALVLGI). The ATP-grasp domain maps to 131 to 303 (YKKLKNLGFN…LAMVLLNNKY (173 aa)).

Its subcellular location is the membrane. This is an uncharacterized protein from Methanocaldococcus jannaschii (strain ATCC 43067 / DSM 2661 / JAL-1 / JCM 10045 / NBRC 100440) (Methanococcus jannaschii).